A 342-amino-acid chain; its full sequence is GTPase Obg (342 aa).

Positions 1-159 constitute an Obg domain; sequence MQFIDQAQIE…KLLRLELKLL (159 aa). Residues 160 to 330 enclose the OBG-type G domain; the sequence is AEVGIIGLPN…MLQEVWGILD (171 aa). GTP-binding positions include 166–173, 191–195, 213–216, 280–283, and 311–313; these read GLPNAGKS, FTTLI, DIPG, NKID, and SAV. Ser-173 and Thr-193 together coordinate Mg(2+).

Belongs to the TRAFAC class OBG-HflX-like GTPase superfamily. OBG GTPase family. In terms of assembly, monomer. Mg(2+) serves as cofactor.

The protein localises to the cytoplasm. Its function is as follows. An essential GTPase which binds GTP, GDP and possibly (p)ppGpp with moderate affinity, with high nucleotide exchange rates and a fairly low GTP hydrolysis rate. Plays a role in control of the cell cycle, stress response, ribosome biogenesis and in those bacteria that undergo differentiation, in morphogenesis control. In Nostoc sp. (strain PCC 7120 / SAG 25.82 / UTEX 2576), this protein is GTPase Obg.